Reading from the N-terminus, the 332-residue chain is Endo-1,4-beta-xylanase (332 aa).

An N-terminal signal peptide occupies residues 1–21 (MLSSTTLLAILSALALTSVQA). In terms of domain architecture, GH10 spans 26-316 (KNSLDYLANK…KSTYYVVQQA (291 aa)). The Proton donor role is filled by Glu120. A disulfide bridge links Cys128 with Cys160. Glu214 serves as the catalytic Nucleophile. Cys247 and Cys253 are disulfide-bonded.

Belongs to the glycosyl hydrolase 10 (cellulase F) family.

The protein localises to the secreted. The enzyme catalyses Endohydrolysis of (1-&gt;4)-beta-D-xylosidic linkages in xylans.. In terms of biological role, requires at least three xylose residues for catalytic activity. Does not have activity against xylobiose. The chain is Endo-1,4-beta-xylanase from Naganishia albida (Cryptococcus albidus).